Reading from the N-terminus, the 286-residue chain is Formyltetrahydrofolate deformylase (286 aa).

Positions 8–88 (VLTLQCPEGI…MDWQLRERGQ (81 aa)) constitute an ACT domain. Aspartate 230 is a catalytic residue.

It belongs to the PurU family.

It carries out the reaction (6R)-10-formyltetrahydrofolate + H2O = (6S)-5,6,7,8-tetrahydrofolate + formate + H(+). The protein operates within purine metabolism; IMP biosynthesis via de novo pathway; formate from 10-formyl-5,6,7,8-tetrahydrofolate: step 1/1. Its function is as follows. Catalyzes the hydrolysis of 10-formyltetrahydrofolate (formyl-FH4) to formate and tetrahydrofolate (FH4). The chain is Formyltetrahydrofolate deformylase from Corynebacterium sp. (strain P-1).